A 581-amino-acid polypeptide reads, in one-letter code: Proline--tRNA ligase (581 aa).

Belongs to the class-II aminoacyl-tRNA synthetase family. ProS type 1 subfamily. As to quaternary structure, homodimer.

Its subcellular location is the cytoplasm. The catalysed reaction is tRNA(Pro) + L-proline + ATP = L-prolyl-tRNA(Pro) + AMP + diphosphate. In terms of biological role, catalyzes the attachment of proline to tRNA(Pro) in a two-step reaction: proline is first activated by ATP to form Pro-AMP and then transferred to the acceptor end of tRNA(Pro). As ProRS can inadvertently accommodate and process non-cognate amino acids such as alanine and cysteine, to avoid such errors it has two additional distinct editing activities against alanine. One activity is designated as 'pretransfer' editing and involves the tRNA(Pro)-independent hydrolysis of activated Ala-AMP. The other activity is designated 'posttransfer' editing and involves deacylation of mischarged Ala-tRNA(Pro). The misacylated Cys-tRNA(Pro) is not edited by ProRS. In Leptothrix cholodnii (strain ATCC 51168 / LMG 8142 / SP-6) (Leptothrix discophora (strain SP-6)), this protein is Proline--tRNA ligase.